The sequence spans 662 residues: DNA topoisomerase 4 subunit B (662 aa).

ATP-binding positions include tyrosine 20, asparagine 60, aspartate 87, 129–135 (GLHGVGI), and lysine 359. Residues 439 to 553 (TELFIVEGDS…EGHLYLAKPP (115 aa)) form the Toprim domain. The Mg(2+) site is built by glutamate 445, aspartate 518, and aspartate 520.

This sequence belongs to the type II topoisomerase family. ParE type 1 subfamily. In terms of assembly, heterotetramer composed of ParC and ParE. It depends on Mg(2+) as a cofactor. Mn(2+) serves as cofactor. Ca(2+) is required as a cofactor.

The enzyme catalyses ATP-dependent breakage, passage and rejoining of double-stranded DNA.. Functionally, topoisomerase IV is essential for chromosome segregation. It relaxes supercoiled DNA. Performs the decatenation events required during the replication of a circular DNA molecule. This Rickettsia conorii (strain ATCC VR-613 / Malish 7) protein is DNA topoisomerase 4 subunit B.